The following is a 688-amino-acid chain: PTS system glucoside-specific EIICBA component (688 aa).

Residues K3 to D427 enclose the PTS EIIC type-1 domain. 10 helical membrane passes run I12–F32, L81–M101, L137–L157, F182–W202, L223–I243, A284–I304, V315–P335, F340–L360, L364–G384, and L395–I415. One can recognise a PTS EIIB type-1 domain in the interval A438 to K519. The active-site Phosphocysteine intermediate; for EIIB activity is the C460. Residues D560 to N664 enclose the PTS EIIA type-1 domain. Catalysis depends on H612, which acts as the Tele-phosphohistidine intermediate; for EIIA activity.

The protein resides in the cell membrane. Functionally, the phosphoenolpyruvate-dependent sugar phosphotransferase system (sugar PTS), a major carbohydrate active -transport system, catalyzes the phosphorylation of incoming sugar substrates concomitantly with their translocation across the cell membrane. This system is involved in alpha- and beta-glucoside transport. The chain is PTS system glucoside-specific EIICBA component (glcB) from Staphylococcus aureus (strain JH1).